A 177-amino-acid chain; its full sequence is Large ribosomal subunit protein uL6 (177 aa).

Belongs to the universal ribosomal protein uL6 family. In terms of assembly, part of the 50S ribosomal subunit.

Functionally, this protein binds to the 23S rRNA, and is important in its secondary structure. It is located near the subunit interface in the base of the L7/L12 stalk, and near the tRNA binding site of the peptidyltransferase center. This Rickettsia felis (strain ATCC VR-1525 / URRWXCal2) (Rickettsia azadi) protein is Large ribosomal subunit protein uL6.